We begin with the raw amino-acid sequence, 426 residues long: Fc receptor-like B (426 aa).

Positions 1-17 (MWPLTALLLLVPSSGQA) are cleaved as a signal peptide. 2 consecutive Ig-like C2-type domains span residues 23 to 101 (PILS…LSVS) and 103 to 189 (DWLI…VAVT). 2 cysteine pairs are disulfide-bonded: Cys44–Cys85 and Cys124–Cys168. Asn152 carries N-linked (GlcNAc...) asparagine glycosylation. Residues 400 to 426 (ELRGTPETPTSHFAVSPGTPETTPVES) are disordered. Over residues 406-426 (ETPTSHFAVSPGTPETTPVES) the composition is skewed to polar residues.

Expressed at low levels. Expressed in B-lymphocytes. Detected in tonsil, lung, kidney, spleen and placenta. Expressed by a small subset of germinal center B-cells in tonsils and by melanocytes (at protein level).

The protein localises to the cytoplasm. It is found in the endoplasmic reticulum. This chain is Fc receptor-like B (FCRLB), found in Homo sapiens (Human).